We begin with the raw amino-acid sequence, 139 residues long: uncharacterized protein (139 aa).

Its subcellular location is the mitochondrion. This is an uncharacterized protein from Marchantia polymorpha (Common liverwort).